We begin with the raw amino-acid sequence, 332 residues long: MGKRAAHIGLRALADLATPMAVRVAATLRVADHIAAGHRTAAEIASAAGAHADSLDRLLRHLVAVGLFTRDGQGVYGLTEFGEQLRDDHAAGKRKWLDMNSAVGRGDLGFVELAHSIRTGQPAYPVRYGTSFWEDLGSDPVLSASFDTLMSHHLELDYTGIAAKYDWAALGHVVDVGGGSGGLLSALLTAHEDLSGTVLDLQGPASAAHRRFLDTGLSGRAQVVVGSFFDPLPAGAGGYVLSAVLHDWDDLSAVAILRRCAEAAGSGGVVLVIEAVAGDEHAGTGMDLRMLTYFGGKERSLAELGELAAQAGLAVRAAHPISYVSIVEMTAL.

R11 contacts substrate. Residues W133, H153, 175 to 179 (DVGGG), G177, D200, 227 to 228 (SF), and 242 to 243 (SA) each bind S-adenosyl-L-methionine. Residue H246 is the Proton acceptor of the active site. Substrate is bound at residue D247.

It belongs to the class I-like SAM-binding methyltransferase superfamily. Cation-independent O-methyltransferase family.

It catalyses the reaction 2,7-dihydroxy-5-methyl-1-naphthoate + S-adenosyl-L-methionine = 2-hydroxy-7-methoxy-5-methyl-1-naphthoate + S-adenosyl-L-homocysteine + H(+). Its pathway is antibiotic biosynthesis. Functionally, S-adenosyl-L-methionine-dependent O-methyltransferase that catalyzes regiospecific methylation at the 7-hydroxy group of 2,7-dihydroxy-5-methyl-1-naphthoate in the biosynthesis of the naphthoate moiety of the neocarzinostatin chromophore. Also recognizes other dihydroxynaphthoate as substrates and catalyzes their regiospecific O-methylation. The carboxylate and its ortho-hydroxy groups of the substrate appear to be crucial for NcsB1 substrate recognition and binding, and O-methylation takes place only at the free hydroxy group of these dihydroxynaphthoic acids. In Streptomyces carzinostaticus, this protein is 2,7-dihydroxy-5-methyl-1-naphthoate 7-O-methyltransferase.